Here is a 142-residue protein sequence, read N- to C-terminus: Putative pre-16S rRNA nuclease (142 aa).

Belongs to the YqgF nuclease family.

It localises to the cytoplasm. Could be a nuclease involved in processing of the 5'-end of pre-16S rRNA. This is Putative pre-16S rRNA nuclease from Mesoplasma florum (strain ATCC 33453 / NBRC 100688 / NCTC 11704 / L1) (Acholeplasma florum).